Consider the following 372-residue polypeptide: NAD(P)H-quinone oxidoreductase subunit 1 (372 aa).

9 helical membrane-spanning segments follow: residues 27 to 47 (LLWLPLPMLMMLIVATVGVLV), 65 to 85 (PEYIGPLGILAPLADGLKLIF), 97 to 117 (WLFTLGPAVVVIPVFLSYIIV), 128 to 148 (LAMGVFLWIALSSIAPIGLLM), 176 to 196 (LALAVLAVAMMSNGLGTVEIV), 204 to 224 (ILSWNVWRQPIGFLVFWIAAL), 254 to 274 (FALFYLGAYVNLVLSALLVSV), 308 to 328 (VLGITMTLIKAYFFVFLAILL), and 347 to 367 (FLLPVGLVNLLLTAGLKLAFP).

It belongs to the complex I subunit 1 family. In terms of assembly, NDH-1 is composed of at least 11 different subunits.

The protein localises to the cellular thylakoid membrane. The catalysed reaction is a plastoquinone + NADH + (n+1) H(+)(in) = a plastoquinol + NAD(+) + n H(+)(out). The enzyme catalyses a plastoquinone + NADPH + (n+1) H(+)(in) = a plastoquinol + NADP(+) + n H(+)(out). NDH-1 shuttles electrons from an unknown electron donor, via FMN and iron-sulfur (Fe-S) centers, to quinones in the respiratory and/or the photosynthetic chain. The immediate electron acceptor for the enzyme in this species is believed to be plastoquinone. Couples the redox reaction to proton translocation, and thus conserves the redox energy in a proton gradient. The chain is NAD(P)H-quinone oxidoreductase subunit 1 from Thermosynechococcus vestitus (strain NIES-2133 / IAM M-273 / BP-1).